Reading from the N-terminus, the 365-residue chain is Putative 2-dehydropantoate 2-reductase (365 aa).

It belongs to the ketopantoate reductase family.

It carries out the reaction (R)-pantoate + NADP(+) = 2-dehydropantoate + NADPH + H(+). It functions in the pathway cofactor biosynthesis; (R)-pantothenate biosynthesis; (R)-pantoate from 3-methyl-2-oxobutanoate: step 2/2. In terms of biological role, catalyzes the NADPH-dependent reduction of ketopantoate into pantoic acid. This chain is Putative 2-dehydropantoate 2-reductase (KPR), found in Arabidopsis thaliana (Mouse-ear cress).